The sequence spans 318 residues: Aspartate carbamoyltransferase catalytic subunit (318 aa).

Positions 64 and 65 each coordinate carbamoyl phosphate. An L-aspartate-binding site is contributed by lysine 92. Positions 114, 142, and 145 each coordinate carbamoyl phosphate. L-aspartate is bound by residues arginine 176 and arginine 230. Positions 271 and 272 each coordinate carbamoyl phosphate.

This sequence belongs to the aspartate/ornithine carbamoyltransferase superfamily. ATCase family. Heterododecamer (2C3:3R2) of six catalytic PyrB chains organized as two trimers (C3), and six regulatory PyrI chains organized as three dimers (R2).

The enzyme catalyses carbamoyl phosphate + L-aspartate = N-carbamoyl-L-aspartate + phosphate + H(+). The protein operates within pyrimidine metabolism; UMP biosynthesis via de novo pathway; (S)-dihydroorotate from bicarbonate: step 2/3. In terms of biological role, catalyzes the condensation of carbamoyl phosphate and aspartate to form carbamoyl aspartate and inorganic phosphate, the committed step in the de novo pyrimidine nucleotide biosynthesis pathway. This is Aspartate carbamoyltransferase catalytic subunit from Desulfovibrio desulfuricans (strain ATCC 27774 / DSM 6949 / MB).